A 1051-amino-acid chain; its full sequence is Ubiquitin-activating enzyme E1 1 (1051 aa).

Tandem repeats lie at residues 56 to 194 and 453 to 605. The 2 approximate repeats stretch occupies residues 56 to 605; sequence GRETMKRLFG…GAKCNTQMVI (550 aa). ATP is bound by residues Ala472, Asp498, Arg509, Lys522, and 570 to 571; that span reads DN. Cys626 serves as the catalytic Glycyl thioester intermediate.

Belongs to the ubiquitin-activating E1 family. Monomer. Post-translationally, the N-terminus is blocked.

The catalysed reaction is ATP + ubiquitin + [E1 ubiquitin-activating enzyme]-L-cysteine = AMP + diphosphate + S-ubiquitinyl-[E1 ubiquitin-activating enzyme]-L-cysteine.. Its pathway is protein modification; protein ubiquitination. Activates ubiquitin by first adenylating its C-terminal glycine residue with ATP, and thereafter linking this residue to the side chain of a cysteine residue in E1, yielding a ubiquitin-E1 thioester and free AMP. This Triticum aestivum (Wheat) protein is Ubiquitin-activating enzyme E1 1.